The sequence spans 65 residues: UPF0434 protein BQ10150 (65 aa).

This sequence belongs to the UPF0434 family.

The polypeptide is UPF0434 protein BQ10150 (Bartonella quintana (strain Toulouse) (Rochalimaea quintana)).